The sequence spans 1534 residues: Alpha-2-macroglobulin homolog (1534 aa).

A signal peptide spans 1-38 (MDTQRFQSQFHWHLSFKFSGAIAACLSLSLVGTGLANA).

It belongs to the protease inhibitor I39 (alpha-2-macroglobulin) family. Bacterial alpha-2-macroglobulin subfamily.

This Escherichia coli O157:H7 protein is Alpha-2-macroglobulin homolog (yfaS).